A 442-amino-acid polypeptide reads, in one-letter code: tRNA modification GTPase MnmE (442 aa).

(6S)-5-formyl-5,6,7,8-tetrahydrofolate is bound by residues Arg27, Glu84, and Lys124. The region spanning 221-366 (GFQIVILGAP…LMELISQASA (146 aa)) is the TrmE-type G domain. GTP contacts are provided by residues 231–236 (NAGKSS), 250–256 (TEEPGTT), 275–278 (DTAG), and 329–332 (NKAD). Ser235 and Thr256 together coordinate Mg(2+). Position 442 (Lys442) interacts with (6S)-5-formyl-5,6,7,8-tetrahydrofolate.

The protein belongs to the TRAFAC class TrmE-Era-EngA-EngB-Septin-like GTPase superfamily. TrmE GTPase family. In terms of assembly, homodimer. Heterotetramer of two MnmE and two MnmG subunits. K(+) serves as cofactor.

It is found in the cytoplasm. Exhibits a very high intrinsic GTPase hydrolysis rate. Involved in the addition of a carboxymethylaminomethyl (cmnm) group at the wobble position (U34) of certain tRNAs, forming tRNA-cmnm(5)s(2)U34. In Chelativorans sp. (strain BNC1), this protein is tRNA modification GTPase MnmE.